Reading from the N-terminus, the 755-residue chain is MSASPLLDNQCDHLPTKMVDLTMVDKADELDRRVSDAFLEREASRGRRITQISTECSAGLACKRLADGRFPEISAGGKVAVLSAYIYIGKEILGRILESKPWARATVSGLVAIDLAPFCMDFSEAQLIQALFLLSGKRCAPIDLSHFVAISISKTAGFRTLPMPLYENGTMKCVTGFTITLEGAVPFDMVAYGRNLMLKGSAGSFPTIDLLYDYRPFFDQCSDSGRIGFFPEDVPKPKVAVIGAGISGLVVANELLHAGVDDVTIYEASDRVGGKLWSHAFRDAPSVVAEMGAMRFPPAAFCLFFFLERYGLSSMRPFPNPGTVDTYLVYQGVQYMWKAGQLPPKLFHRVYNGWRAFLKDGFYERDIVLASPVAITQALKSGDIRWAHDSWQIWLNRFGRESFSSGIERIFLGTHPPGGETWSFPHDWDLFKLMGIGSGGFGPVFESGFIEILRLVINGYEENQRMCPEGISELPRRIASEVVNGVSVSQRICHVQVRAIQKEKTKIKIRLKSGISELYDKVVVTSGLANIQLRHCLTCDTNIFQAPVNQAVDNSHMTGSSKLFLMTERKFWLDHILPSCVLMDGIAKAVYCLDYEPQDPNGKGLVLISYTWEDDSHKLLAVPDKKERLCLLRDAISRSFPAFAQHLFPACADYDQNVIQHDWLTDENAGGAFKLNRRGEDFYSEELFFQALDTANDTGVYLAGCSCSFTGGWVEGANRTPCNAVCAIIHNCGGILAKGNPLEHSWKRYNYRTRN.

4 residues coordinate FMN: Ser-247, Glu-267, Lys-275, and Arg-295. Residue Arg-295 coordinates substrate.

This sequence belongs to the tryptophan 2-monooxygenase family. FMN is required as a cofactor.

It catalyses the reaction L-tryptophan + O2 = indole-3-acetamide + CO2 + H2O. Its pathway is plant hormone metabolism; auxin biosynthesis. This is Tryptophan 2-monooxygenase (tms1) from Agrobacterium tumefaciens (strain Ach5).